Reading from the N-terminus, the 622-residue chain is Low affinity potassium transport system protein Kup (622 aa).

Helical transmembrane passes span 9-29, 49-69, 103-123, 137-157, 165-185, 213-233, 247-267, 276-296, 337-357, 363-383, 396-416, and 419-439; these read LSAI…TSPL, VFGF…IKYL, VIMG…TPAI, PELD…LFMI, VGKL…GLGL, VSFI…ALYA, WFSV…ALLL, PFFL…AALA, IYIP…IVSF, LAAA…ILST, FVAL…SANL, and LLSG…IMTT.

The protein belongs to the HAK/KUP transporter (TC 2.A.72) family.

It localises to the cell inner membrane. It catalyses the reaction K(+)(in) + H(+)(in) = K(+)(out) + H(+)(out). In terms of biological role, responsible for the low-affinity transport of potassium into the cell. Likely operates as a K(+):H(+) symporter. This chain is Low affinity potassium transport system protein Kup, found in Citrobacter koseri (strain ATCC BAA-895 / CDC 4225-83 / SGSC4696).